A 244-amino-acid polypeptide reads, in one-letter code: MRIIVVDNYEEMSKKAAAMIASQVILKPDSVLGLATGDTPIGMYKEIINIYKNEKMNFSKVKTFNLDEYYGLNRENPQSYYYYMMNNLFNHVNIDKNNINIPNGMADNIEVECKEYERKIDKAGGIDLQILGIGVNGHIGFNEPNISFESETHLVNLNEKTIESNSRFFSSKEEVPTKAISMGIKSIIHSKKIILLACGSAKSDAVSKAINGKINPNIPASILQLHRDVVVIIDKEAASKLKLK.

The active-site Proton acceptor; for enolization step is Asp67. Residue Asn136 is the For ring-opening step of the active site. His138 acts as the Proton acceptor; for ring-opening step in catalysis. Residue Glu143 is the For ring-opening step of the active site.

Belongs to the glucosamine/galactosamine-6-phosphate isomerase family. NagB subfamily.

The catalysed reaction is alpha-D-glucosamine 6-phosphate + H2O = beta-D-fructose 6-phosphate + NH4(+). Its pathway is amino-sugar metabolism; N-acetylneuraminate degradation; D-fructose 6-phosphate from N-acetylneuraminate: step 5/5. In terms of biological role, catalyzes the reversible isomerization-deamination of glucosamine 6-phosphate (GlcN6P) to form fructose 6-phosphate (Fru6P) and ammonium ion. In Clostridium botulinum (strain Okra / Type B1), this protein is Glucosamine-6-phosphate deaminase.